The chain runs to 181 residues: HGPRTase-like protein 2 (181 aa).

It belongs to the purine/pyrimidine phosphoribosyltransferase family. Archaeal HPRT subfamily.

May catalyze a purine salvage reaction, the substrate is unknown. In Haloferax volcanii (strain ATCC 29605 / DSM 3757 / JCM 8879 / NBRC 14742 / NCIMB 2012 / VKM B-1768 / DS2) (Halobacterium volcanii), this protein is HGPRTase-like protein 2.